Reading from the N-terminus, the 526-residue chain is Organic cation/carnitine transporter 4 (526 aa).

Residues 1-52 (MESPEDRNGNDVRQPLLEKIPVKKEAEGEERLCIDEMLQRYCGEFGRWQLKH) lie on the Cytoplasmic side of the membrane. The helical transmembrane segment at 53-73 (FVLTCIAWALEAFHTMVMIFA) threads the bilayer. At 74–123 (DQEPEWRCVGSDCRVGSLNCELDPSSWEWTAGKGSSTVSEWGLICGDKYK) the chain is on the extracellular side. Residues 124-144 (VGLVQALFFAGCMIGAGVFGH) form a helical membrane-spanning segment. Residues 145–153 (LSDSKLGRK) are Cytoplasmic-facing. A helical membrane pass occupies residues 154 to 174 (GSLTVVCIINAIFGIATAFSP). Residues 175-179 (NYWTY) are Extracellular-facing. The chain crosses the membrane as a helical span at residues 180–200 (VVLRFLTGFSTGGVGLTAFVL). 201–208 (ATEPIGPS) serves as a coordination point for ATP. The Cytoplasmic segment spans residues 201-214 (ATEPIGPSKRGVAG). A helical membrane pass occupies residues 215–235 (MSTFYFFSAGIAVLSGIAYVF). Topologically, residues 236-240 (RSWRE) are extracellular. A helical membrane pass occupies residues 241-261 (LFIVSSLPSLLFLLIVIPFIS). Over 262-331 (ESPRWYLVRG…ILSPLMRMRL (70 aa)) the chain is Cytoplasmic. The chain crosses the membrane as a helical span at residues 332–352 (VISVAISFTVSIVYYGLSLNV). Topologically, residues 353-360 (GNLKTNLY) are extracellular. The chain crosses the membrane as a helical span at residues 361-381 (LNVFVNAVSEMPAFAITAVLL). At 382 to 390 (DKYGRKPLS) the chain is on the cytoplasmic side. The helical transmembrane segment at 391 to 411 (IGTQWFSCVFCLVGFSVWGAG) threads the bilayer. Over 412–418 (PWKSVRM) the chain is Extracellular. A helical transmembrane segment spans residues 419 to 439 (VSGVLGIFGMAGTYNLLFIYI). The Cytoplasmic portion of the chain corresponds to 440–451 (AELFPTVVRNAA). A helical membrane pass occupies residues 452–472 (LGCATQAAQMGAILAPFVVVL). Residues 473-475 (GEE) lie on the Extracellular side of the membrane. A helical membrane pass occupies residues 476-496 (LPFGVFAVCGLVGGGLAFYLP). Residues 497 to 526 (ETLNKPLYDTMFGMHEAESESNRERGEVIC) are Cytoplasmic-facing.

Belongs to the major facilitator (TC 2.A.1) superfamily. Organic cation transporter (TC 2.A.1.19) family. In terms of tissue distribution, mostly expressed in siliques, and, to a lower extent, in stems, leaves, flowers and siliques. Present in pollen. In the stems of secondary inflorescences present in the phloem cells and xylem parenchyma cells.

It localises to the vacuole membrane. In terms of biological role, high affinity carnitine transporter involved in the active cellular uptake of carnitine. Also transports organic cations. The chain is Organic cation/carnitine transporter 4 (OCT4) from Arabidopsis thaliana (Mouse-ear cress).